Here is a 162-residue protein sequence, read N- to C-terminus: Shikimate kinase (162 aa).

11–16 (GSGKSS) contacts ATP. Residue Ser15 coordinates Mg(2+). Positions 33, 57, and 80 each coordinate substrate. Arg116 provides a ligand contact to ATP. Residue Arg132 coordinates substrate.

It belongs to the shikimate kinase family. In terms of assembly, monomer. It depends on Mg(2+) as a cofactor.

The protein resides in the cytoplasm. It carries out the reaction shikimate + ATP = 3-phosphoshikimate + ADP + H(+). Its pathway is metabolic intermediate biosynthesis; chorismate biosynthesis; chorismate from D-erythrose 4-phosphate and phosphoenolpyruvate: step 5/7. In terms of biological role, catalyzes the specific phosphorylation of the 3-hydroxyl group of shikimic acid using ATP as a cosubstrate. In Helicobacter pylori (strain P12), this protein is Shikimate kinase.